The primary structure comprises 265 residues: Imidazole glycerol phosphate synthase subunit HisF (265 aa).

Residues aspartate 17 and aspartate 136 contribute to the active site.

It belongs to the HisA/HisF family. As to quaternary structure, heterodimer of HisH and HisF.

It localises to the cytoplasm. It catalyses the reaction 5-[(5-phospho-1-deoxy-D-ribulos-1-ylimino)methylamino]-1-(5-phospho-beta-D-ribosyl)imidazole-4-carboxamide + L-glutamine = D-erythro-1-(imidazol-4-yl)glycerol 3-phosphate + 5-amino-1-(5-phospho-beta-D-ribosyl)imidazole-4-carboxamide + L-glutamate + H(+). It functions in the pathway amino-acid biosynthesis; L-histidine biosynthesis; L-histidine from 5-phospho-alpha-D-ribose 1-diphosphate: step 5/9. IGPS catalyzes the conversion of PRFAR and glutamine to IGP, AICAR and glutamate. The HisF subunit catalyzes the cyclization activity that produces IGP and AICAR from PRFAR using the ammonia provided by the HisH subunit. The polypeptide is Imidazole glycerol phosphate synthase subunit HisF (Mycolicibacterium paratuberculosis (strain ATCC BAA-968 / K-10) (Mycobacterium paratuberculosis)).